Consider the following 506-residue polypeptide: Glutamate--tRNA ligase (506 aa).

The 'HIGH' region motif lies at 24-34; the sequence is PSPTGLQHIGG. Residues Cys-121, Cys-123, Cys-148, and His-150 each contribute to the Zn(2+) site. Residues 266–270 carry the 'KMSKS' region motif; sequence KLSKR. Lys-269 lines the ATP pocket.

It belongs to the class-I aminoacyl-tRNA synthetase family. Glutamate--tRNA ligase type 1 subfamily. In terms of assembly, monomer. The cofactor is Zn(2+).

The protein localises to the cytoplasm. It carries out the reaction tRNA(Glu) + L-glutamate + ATP = L-glutamyl-tRNA(Glu) + AMP + diphosphate. Its function is as follows. Catalyzes the attachment of glutamate to tRNA(Glu) in a two-step reaction: glutamate is first activated by ATP to form Glu-AMP and then transferred to the acceptor end of tRNA(Glu). In Borrelia duttonii (strain Ly), this protein is Glutamate--tRNA ligase.